The chain runs to 186 residues: UPF0303 protein ZMO1353 (186 aa).

It belongs to the UPF0303 family.

This chain is UPF0303 protein ZMO1353, found in Zymomonas mobilis subsp. mobilis (strain ATCC 31821 / ZM4 / CP4).